A 299-amino-acid polypeptide reads, in one-letter code: Apolipoprotein E (299 aa).

The N-terminal stretch at methionine 1–alanine 18 is a signal peptide. Tandem repeats lie at residues leucine 74–alanine 95, proline 96–glycine 117, alanine 118–glycine 139, glutamine 140–leucine 161, arginine 162–glutamate 183, arginine 184–alanine 205, and glycine 224–glutamate 245. Residues leucine 74–glutamate 245 form an 8 X 22 AA approximate tandem repeats region. Position 137 is a methionine sulfoxide (methionine 137). Serine 141 carries the post-translational modification Phosphoserine. The interval histidine 152 to arginine 162 is LDL and other lipoprotein receptors binding. Methionine 156–arginine 159 provides a ligand contact to heparin. The tract at residues serine 204–methionine 273 is lipid-binding and lipoprotein association. Glycine 219–leucine 226 is a heparin binding site. A specificity for association with VLDL region spans residues arginine 261–methionine 273.

This sequence belongs to the apolipoprotein A1/A4/E family. In terms of assembly, homotetramer. May interact with ABCA1; functionally associated with ABCA1 in the biogenesis of HDLs. May interact with APP/A4 amyloid-beta peptide; the interaction is extremely stable in vitro but its physiological significance is unclear. May interact with MAPT. May interact with MAP2. In the cerebrospinal fluid, interacts with secreted SORL1. Interacts with PMEL; this allows the loading of PMEL luminal fragment on ILVs to induce fibril nucleation. In terms of processing, APOE exists as multiple glycosylated and sialylated glycoforms within cells and in plasma. The extent of glycosylation and sialylation are tissue and context specific. Glycated in plasma VLDL. Post-translationally, phosphorylated by FAM20C in the extracellular medium.

The protein resides in the secreted. The protein localises to the extracellular space. It localises to the extracellular matrix. It is found in the extracellular vesicle. Its subcellular location is the endosome. The protein resides in the multivesicular body. Its function is as follows. APOE is an apolipoprotein, a protein associating with lipid particles, that mainly functions in lipoprotein-mediated lipid transport between organs via the plasma and interstitial fluids. APOE is a core component of plasma lipoproteins and is involved in their production, conversion and clearance. Apolipoproteins are amphipathic molecules that interact both with lipids of the lipoprotein particle core and the aqueous environment of the plasma. As such, APOE associates with chylomicrons, chylomicron remnants, very low density lipoproteins (VLDL) and intermediate density lipoproteins (IDL) but shows a preferential binding to high-density lipoproteins (HDL). It also binds a wide range of cellular receptors including the LDL receptor/LDLR, the LDL receptor-related proteins LRP1, LRP2 and LRP8 and the very low-density lipoprotein receptor/VLDLR that mediate the cellular uptake of the APOE-containing lipoprotein particles. Finally, APOE also has a heparin-binding activity and binds heparan-sulfate proteoglycans on the surface of cells, a property that supports the capture and the receptor-mediated uptake of APOE-containing lipoproteins by cells. A main function of APOE is to mediate lipoprotein clearance through the uptake of chylomicrons, VLDLs, and HDLs by hepatocytes. APOE is also involved in the biosynthesis by the liver of VLDLs as well as their uptake by peripheral tissues ensuring the delivery of triglycerides and energy storage in muscle, heart and adipose tissues. By participating in the lipoprotein-mediated distribution of lipids among tissues, APOE plays a critical role in plasma and tissues lipid homeostasis. APOE is also involved in two steps of reverse cholesterol transport, the HDLs-mediated transport of cholesterol from peripheral tissues to the liver, and thereby plays an important role in cholesterol homeostasis. First, it is functionally associated with ABCA1 in the biogenesis of HDLs in tissues. Second, it is enriched in circulating HDLs and mediates their uptake by hepatocytes. APOE also plays an important role in lipid transport in the central nervous system, regulating neuron survival and sprouting. The polypeptide is Apolipoprotein E (APOE) (Erethizon dorsatum (North American porcupine)).